The primary structure comprises 314 residues: Ribosomal protein L11 methyltransferase (314 aa).

4 residues coordinate S-adenosyl-L-methionine: T163, G184, D206, and N248.

It belongs to the methyltransferase superfamily. PrmA family.

The protein resides in the cytoplasm. It catalyses the reaction L-lysyl-[protein] + 3 S-adenosyl-L-methionine = N(6),N(6),N(6)-trimethyl-L-lysyl-[protein] + 3 S-adenosyl-L-homocysteine + 3 H(+). Its function is as follows. Methylates ribosomal protein L11. This is Ribosomal protein L11 methyltransferase from Lactobacillus delbrueckii subsp. bulgaricus (strain ATCC 11842 / DSM 20081 / BCRC 10696 / JCM 1002 / NBRC 13953 / NCIMB 11778 / NCTC 12712 / WDCM 00102 / Lb 14).